The following is a 775-amino-acid chain: Tumor necrosis factor alpha-induced protein 3 (775 aa).

Alanine 2 bears the N-acetylalanine mark. The interval 58 to 300 is TRAF-binding; sequence PQFREIIHKA…LTDPENEMKE (243 aa). Positions 92-263 constitute an OTU domain; the sequence is LVALKTNGDG…SQHFVPLVTL (172 aa). Aspartate 100 is an active-site residue. Cysteine 103 serves as the catalytic Nucleophile. Interaction with ubiquitin stretches follow at residues 157-159, 190-192, and 224-227; these read LCY, SLE, and FAPL. Catalysis depends on histidine 256, which acts as the Proton acceptor. Residues 369-775 are interaction with TNIP1; sequence AQNPLEPSTP…ECYQFKQMYG (407 aa). The segment at 381 to 416 adopts an A20-type 1 zinc-finger fold; sequence SLMDIKCETPNCPFFMSVNTQPLCHECSERRQKNQS. Residues 386–445 form an interaction with RIPK1 region; it reads KCETPNCPFFMSVNTQPLCHECSERRQKNQSKLPKLNSKLGPEGLPGVGLGSSNWSPEET. Zn(2+) is bound by residues cysteine 387, cysteine 392, cysteine 404, and cysteine 407. The interval 415–455 is disordered; the sequence is QSKLPKLNSKLGPEGLPGVGLGSSNWSPEETAGGPHSAPPT. Phosphoserine is present on serine 451. 2 consecutive A20-type zinc fingers follow at residues 464–499 and 500–533; these read ETTA…NASH and TADP…AEPS. Residues cysteine 470, cysteine 475, cysteine 487, cysteine 490, cysteine 506, cysteine 509, cysteine 521, and cysteine 524 each coordinate Zn(2+). Over residues 567–580 the composition is skewed to polar residues; sequence TGNVSPSGCLSQAA. The interval 567–590 is disordered; that stretch reads TGNVSPSGCLSQAARTPGDRAGTS. 4 A20-type zinc fingers span residues 586-621, 636-671, 695-730, and 741-775; these read RAGT…ENKQ, FQNN…NQRF, VASR…RVGS, and EPPK…QMYG. Residues 590–640 form a required for proteasomal degradation of UBE2N and UBE2D3, TRAF6 deubiquitination, and TAX1BP1 interaction with UBE2N region; the sequence is SKCRKAGCMYFGTPENKGFCTLCFIEYRENKQSVTASEKAGSPAPRFQNNV. Positions 591–775 are sufficient for inhibitory activity of TNF-induced NF-kappa-B activity; the sequence is KCRKAGCMYF…ECYQFKQMYG (185 aa). Zn(2+) is bound by residues cysteine 592, cysteine 597, cysteine 609, cysteine 612, cysteine 642, cysteine 647, cysteine 659, cysteine 662, cysteine 701, cysteine 706, cysteine 718, cysteine 721, cysteine 747, cysteine 752, cysteine 764, and cysteine 767. The tract at residues 682–775 is required for lysosomal localization and for TRAF2 lysosomal degradation; the sequence is RSSQHRDMPR…ECYQFKQMYG (94 aa).

The protein belongs to the peptidase C64 family. Homodimer. Interacts with TNIP1, TAX1BP1 and TRAF2. Interacts with RNF11, ITCH and TAX1BP1 only after TNF stimulation; these interaction are transient and they are lost after 1 hour of stimulation with TNF. Interacts with YWHAZ and YWHAH. Interacts with IKBKG; the interaction is induced by TNF stimulation and by polyubiquitin. Interacts with RIPK1. Interacts with UBE2N; the interaction requires TAX1BP1. Interacts with TRAF6. In terms of tissue distribution, found in most tissues during development. Strikingly high levels are found in lymphoid organs, including the thymus, spleen, and gut-associated lymphoid tissue. Constitutively expressed in immature and mature thymocyte subpopulations as well as in resting peripheral T-cells; activation of these leads to down-regulation.

The protein localises to the cytoplasm. Its subcellular location is the nucleus. It is found in the lysosome. It catalyses the reaction Thiol-dependent hydrolysis of ester, thioester, amide, peptide and isopeptide bonds formed by the C-terminal Gly of ubiquitin (a 76-residue protein attached to proteins as an intracellular targeting signal).. In terms of biological role, ubiquitin-editing enzyme that contains both ubiquitin ligase and deubiquitinase activities. Involved in immune and inflammatory responses signaled by cytokines, such as TNF-alpha and IL-1 beta, or pathogens via Toll-like receptors (TLRs) through terminating NF-kappa-B activity. Essential component of a ubiquitin-editing protein complex, comprising also RNF11, ITCH and TAX1BP1, that ensures the transient nature of inflammatory signaling pathways. In cooperation with TAX1BP1 promotes disassembly of E2-E3 ubiquitin protein ligase complexes in IL-1R and TNFR-1 pathways; affected are at least E3 ligases TRAF6, TRAF2 and BIRC2, and E2 ubiquitin-conjugating enzymes UBE2N and UBE2D3. In cooperation with TAX1BP1 promotes ubiquitination of UBE2N and proteasomal degradation of UBE2N and UBE2D3. Upon TNF stimulation, deubiquitinates 'Lys-63'-polyubiquitin chains on RIPK1 and catalyzes the formation of 'Lys-48'-polyubiquitin chains. This leads to RIPK1 proteasomal degradation and consequently termination of the TNF- or LPS-mediated activation of NF-kappa-B. Deubiquitinates TRAF6 probably acting on 'Lys-63'-linked polyubiquitin. Upon T-cell receptor (TCR)-mediated T-cell activation, deubiquitinates 'Lys-63'-polyubiquitin chains on MALT1 thereby mediating disassociation of the CBM (CARD11:BCL10:MALT1) and IKK complexes and preventing sustained IKK activation. Deubiquitinates NEMO/IKBKG; the function is facilitated by TNIP1 and leads to inhibition of NF-kappa-B activation. Upon stimulation by bacterial peptidoglycans, probably deubiquitinates RIPK2. Can also inhibit I-kappa-B-kinase (IKK) through a non-catalytic mechanism which involves polyubiquitin; polyubiquitin promotes association with IKBKG and prevents IKK MAP3K7-mediated phosphorylation. Targets TRAF2 for lysosomal degradation. In vitro able to deubiquitinate 'Lys-11'-, 'Lys-48'- and 'Lys-63' polyubiquitin chains. Inhibitor of programmed cell death. Has a role in the function of the lymphoid system. Required for LPS-induced production of pro-inflammatory cytokines and IFN beta in LPS-tolerized macrophages. This Mus musculus (Mouse) protein is Tumor necrosis factor alpha-induced protein 3 (Tnfaip3).